A 451-amino-acid polypeptide reads, in one-letter code: Exodeoxyribonuclease 7 large subunit (451 aa).

It belongs to the XseA family. Heterooligomer composed of large and small subunits.

The protein localises to the cytoplasm. The enzyme catalyses Exonucleolytic cleavage in either 5'- to 3'- or 3'- to 5'-direction to yield nucleoside 5'-phosphates.. In terms of biological role, bidirectionally degrades single-stranded DNA into large acid-insoluble oligonucleotides, which are then degraded further into small acid-soluble oligonucleotides. In Bacillus cytotoxicus (strain DSM 22905 / CIP 110041 / 391-98 / NVH 391-98), this protein is Exodeoxyribonuclease 7 large subunit.